The sequence spans 98 residues: MSLIHINIFLAFTVSLMGLLMYRSHLMSSLLCLEGMMLSLFIMATMMVLNSHFTLAIMMPIILLVFAACEAALGLSLLVMISNTYGMDYVQNLNLLQC.

The next 3 helical transmembrane spans lie at 1–21 (MSLI…GLLM), 29–49 (SLLC…MMVL), and 61–81 (IILL…LVMI).

It belongs to the complex I subunit 4L family. As to quaternary structure, core subunit of respiratory chain NADH dehydrogenase (Complex I) which is composed of 45 different subunits.

Its subcellular location is the mitochondrion inner membrane. It carries out the reaction a ubiquinone + NADH + 5 H(+)(in) = a ubiquinol + NAD(+) + 4 H(+)(out). In terms of biological role, core subunit of the mitochondrial membrane respiratory chain NADH dehydrogenase (Complex I) which catalyzes electron transfer from NADH through the respiratory chain, using ubiquinone as an electron acceptor. Part of the enzyme membrane arm which is embedded in the lipid bilayer and involved in proton translocation. In Rhinoceros unicornis (Greater Indian rhinoceros), this protein is NADH-ubiquinone oxidoreductase chain 4L (MT-ND4L).